The sequence spans 479 residues: Rifampicin monooxygenase (479 aa).

Positions 12, 31, 32, 41, 98, 122, 156, 278, 291, and 292 each coordinate FAD.

The protein belongs to the rifampicin monooxygenase family. Requires FAD as cofactor.

It catalyses the reaction rifampicin + NADPH + O2 = rifampicin para-naphthoquinone carboxamide + NADP(+) + H2O + H(+). The catalysed reaction is rifampicin + NADH + O2 = rifampicin para-naphthoquinone carboxamide + NAD(+) + H2O + H(+). Functionally, monooxygenase that can modify rifampicin, thereby inactivating its antibiotic activity. This Rhodococcus hoagii (Corynebacterium equii) protein is Rifampicin monooxygenase.